The sequence spans 103 residues: Histone H4 (103 aa).

Over residues 1–14 the composition is skewed to gly residues; the sequence is MSGRGKGGKGLGKG. Residues 1 to 20 are disordered; the sequence is MSGRGKGGKGLGKGGAKRHR. Ser-2 carries the post-translational modification N-acetylserine. Lys-17 carries the post-translational modification N6-acetyllysine. A DNA-binding region spans residues 17–21; sequence KRHRK. Lys-21 is modified (N6-methyllysine).

This sequence belongs to the histone H4 family. In terms of assembly, the nucleosome is a histone octamer containing two molecules each of H2A, H2B, H3 and H4 assembled in one H3-H4 heterotetramer and two H2A-H2B heterodimers. The octamer wraps approximately 147 bp of DNA.

The protein resides in the nucleus. Its subcellular location is the chromosome. Functionally, core component of nucleosome. Nucleosomes wrap and compact DNA into chromatin, limiting DNA accessibility to the cellular machineries which require DNA as a template. Histones thereby play a central role in transcription regulation, DNA repair, DNA replication and chromosomal stability. DNA accessibility is regulated via a complex set of post-translational modifications of histones, also called histone code, and nucleosome remodeling. The polypeptide is Histone H4 (Pyrenomonas salina).